Reading from the N-terminus, the 305-residue chain is Pseudouridine-5'-phosphate glycosidase (305 aa).

The active-site Proton donor is the E28. Substrate contacts are provided by K89 and V109. D141 is a Mn(2+) binding site. Residue 143-145 participates in substrate binding; sequence SAD. Catalysis depends on K162, which acts as the Nucleophile.

The protein belongs to the pseudouridine-5'-phosphate glycosidase family. In terms of assembly, homotrimer. Requires Mn(2+) as cofactor.

It catalyses the reaction D-ribose 5-phosphate + uracil = psi-UMP + H2O. Functionally, catalyzes the reversible cleavage of pseudouridine 5'-phosphate (PsiMP) to ribose 5-phosphate and uracil. Functions biologically in the cleavage direction, as part of a pseudouridine degradation pathway. The chain is Pseudouridine-5'-phosphate glycosidase from Dinoroseobacter shibae (strain DSM 16493 / NCIMB 14021 / DFL 12).